Consider the following 137-residue polypeptide: Nucleoside diphosphate kinase (137 aa).

The ATP site is built by Lys10, Phe58, Arg86, Thr92, Arg103, and Asn113. His116 acts as the Pros-phosphohistidine intermediate in catalysis.

Belongs to the NDK family. As to quaternary structure, homotetramer. The cofactor is Mg(2+).

It localises to the cytoplasm. The enzyme catalyses a 2'-deoxyribonucleoside 5'-diphosphate + ATP = a 2'-deoxyribonucleoside 5'-triphosphate + ADP. It carries out the reaction a ribonucleoside 5'-diphosphate + ATP = a ribonucleoside 5'-triphosphate + ADP. In terms of biological role, major role in the synthesis of nucleoside triphosphates other than ATP. The ATP gamma phosphate is transferred to the NDP beta phosphate via a ping-pong mechanism, using a phosphorylated active-site intermediate. The chain is Nucleoside diphosphate kinase from Helicobacter pylori (strain ATCC 700392 / 26695) (Campylobacter pylori).